A 118-amino-acid chain; its full sequence is Ribonuclease P protein component (118 aa).

This sequence belongs to the RnpA family. Consists of a catalytic RNA component (M1 or rnpB) and a protein subunit.

The enzyme catalyses Endonucleolytic cleavage of RNA, removing 5'-extranucleotides from tRNA precursor.. In terms of biological role, RNaseP catalyzes the removal of the 5'-leader sequence from pre-tRNA to produce the mature 5'-terminus. It can also cleave other RNA substrates such as 4.5S RNA. The protein component plays an auxiliary but essential role in vivo by binding to the 5'-leader sequence and broadening the substrate specificity of the ribozyme. The protein is Ribonuclease P protein component of Levilactobacillus brevis (strain ATCC 367 / BCRC 12310 / CIP 105137 / JCM 1170 / LMG 11437 / NCIMB 947 / NCTC 947) (Lactobacillus brevis).